Consider the following 197-residue polypeptide: Imidazoleglycerol-phosphate dehydratase (197 aa).

The protein belongs to the imidazoleglycerol-phosphate dehydratase family.

The protein localises to the cytoplasm. The enzyme catalyses D-erythro-1-(imidazol-4-yl)glycerol 3-phosphate = 3-(imidazol-4-yl)-2-oxopropyl phosphate + H2O. It functions in the pathway amino-acid biosynthesis; L-histidine biosynthesis; L-histidine from 5-phospho-alpha-D-ribose 1-diphosphate: step 6/9. This is Imidazoleglycerol-phosphate dehydratase from Syntrophomonas wolfei subsp. wolfei (strain DSM 2245B / Goettingen).